We begin with the raw amino-acid sequence, 275 residues long: 3-oxo-isoapionate decarboxylase (275 aa).

It catalyses the reaction 3-oxoisoapionate + H(+) = L-erythrulose + CO2. The protein operates within carbohydrate metabolism. Functionally, involved in catabolism of D-apiose. Catalyzes decarboxylation of 3-oxo-isoapionate to L-erythrulose. This Pectobacterium atrosepticum (strain SCRI 1043 / ATCC BAA-672) (Erwinia carotovora subsp. atroseptica) protein is 3-oxo-isoapionate decarboxylase.